The following is a 1358-amino-acid chain: Probable serine/threonine-protein kinase ifkB (1358 aa).

The region spanning 1–582 (MIGKGGFGVV…TKQLLESGLL (582 aa)) is the Protein kinase domain. ATP is bound by residues 2–10 (IGKGGFGVV) and lysine 25. Residues 125 to 359 (GANNTAGGGD…SSSRKKPPKE (235 aa)) are disordered. Positions 136-148 (VSNANSNKSMIVG) are enriched in polar residues. Residues 149–196 (NNNKKLTLSSSNTSSSSSLLSNNKSKILNTSKSTSTNTSTSTSTSNTN) are compositionally biased toward low complexity. The span at 197-208 (KNKKISKKKKSK) shows a compositional bias: basic residues. The span at 258–285 (NNNNDSNNNYHSDNESDSFSGSISMSDG) shows a compositional bias: low complexity. Positions 306-333 (DDNENDDDDEEDDDDEYDEEDDDYETFD) are enriched in acidic residues. A compositionally biased stretch (low complexity) spans 342–351 (SNNSKLSTSS). Aspartate 413 functions as the Proton acceptor in the catalytic mechanism. Disordered stretches follow at residues 445–470 (DDLNSSTSNAANNINLSSSTNSTAQQ) and 1148–1204 (GSGG…QQTS). Residues 447–466 (LNSSTSNAANNINLSSSTNS) show a composition bias toward low complexity. A compositionally biased stretch (gly residues) spans 1148–1172 (GSGGSGGSGGGSSMSSGGGGGGNSN). A compositionally biased stretch (low complexity) spans 1185–1199 (SNQSTSSSGNSNNSN).

The protein belongs to the protein kinase superfamily. Ser/Thr protein kinase family. GCN2 subfamily.

It catalyses the reaction L-seryl-[protein] + ATP = O-phospho-L-seryl-[protein] + ADP + H(+). The enzyme catalyses L-threonyl-[protein] + ATP = O-phospho-L-threonyl-[protein] + ADP + H(+). This is Probable serine/threonine-protein kinase ifkB (ifkB) from Dictyostelium discoideum (Social amoeba).